Reading from the N-terminus, the 454-residue chain is LETM1 domain-containing protein YLH47, mitochondrial (454 aa).

Residues 1-45 constitute a mitochondrion transit peptide; that stretch reads MLKYRSLPIKRAIHHPAPGITPISPRIMVSRLRVIPSFNLKFNRW. The Mitochondrial intermembrane segment spans residues 46–136; it reads NSSVPESSKK…LKRTTQDIVR (91 aa). A disordered region spans residues 51 to 73; it reads ESSKKELKTTDGNQESASKVSPV. A helical membrane pass occupies residues 137 to 157; sequence LVPFAAFLIIPFAELLLPFAL. Residues 158-454 lie on the Mitochondrial matrix side of the membrane; that stretch reads KLFPNLLPST…IGEAAAIKEK (297 aa). In terms of domain architecture, Letm1 RBD spans 177–371; the sequence is KLENLRNTRK…LCDVLIGIPD (195 aa). Positions 376 to 423 form a coiled coil; the sequence is EVKVNVVKEDEASAKQKLKQLREQEEIMKEEEQQEENAIVSVKDELSL. Composition is skewed to basic and acidic residues over residues 420–430 and 437–454; these read ELSLDDQDKNI and VKPH…IKEK. The disordered stretch occupies residues 420-454; that stretch reads ELSLDDQDKNIDAAAPDVKPHDTKPIGEAAAIKEK.

Associates with the mitochondrial ribosomes.

The protein localises to the mitochondrion inner membrane. In terms of biological role, involved in mitochondrial potassium homeostasis through the mitochondrial K(+)/H(+) exchange regulation. The chain is LETM1 domain-containing protein YLH47, mitochondrial (YLH47) from Saccharomyces cerevisiae (strain ATCC 204508 / S288c) (Baker's yeast).